A 126-amino-acid polypeptide reads, in one-letter code: Aspartate 1-decarboxylase (126 aa).

Ser-25 acts as the Schiff-base intermediate with substrate; via pyruvic acid in catalysis. Ser-25 bears the Pyruvic acid (Ser) mark. A substrate-binding site is contributed by Thr-57. Tyr-58 serves as the catalytic Proton donor. 73–75 (GGA) lines the substrate pocket.

Belongs to the PanD family. In terms of assembly, heterooctamer of four alpha and four beta subunits. Requires pyruvate as cofactor. Post-translationally, is synthesized initially as an inactive proenzyme, which is activated by self-cleavage at a specific serine bond to produce a beta-subunit with a hydroxyl group at its C-terminus and an alpha-subunit with a pyruvoyl group at its N-terminus.

Its subcellular location is the cytoplasm. The catalysed reaction is L-aspartate + H(+) = beta-alanine + CO2. It functions in the pathway cofactor biosynthesis; (R)-pantothenate biosynthesis; beta-alanine from L-aspartate: step 1/1. Catalyzes the pyruvoyl-dependent decarboxylation of aspartate to produce beta-alanine. This is Aspartate 1-decarboxylase from Stenotrophomonas maltophilia (strain R551-3).